A 309-amino-acid polypeptide reads, in one-letter code: Glutaminase (309 aa).

Residues Ser-65, Asn-117, Glu-162, Asn-169, Tyr-193, Tyr-245, and Val-263 each contribute to the substrate site.

It belongs to the glutaminase family. Homotetramer.

It carries out the reaction L-glutamine + H2O = L-glutamate + NH4(+). This Geobacillus thermodenitrificans (strain NG80-2) protein is Glutaminase.